A 202-amino-acid polypeptide reads, in one-letter code: MATNITWHPNLTYDERKELRKQDGCTVWLTGLSASGKSTIACALEQLLLQKNLSAYRLDGDNIRFGLNKDLGFSEQDRNENIRRISEVSKLFADSCAVSITSFISPYRVDRDRARDLHKEAGLKFIEIFVDVPLEVAEQRDPKGLYKKAREGVIKEFTGISAPYEAPKAPELHLRTDQKTVEECAAIIYEYLVNEKIIRKHL.

Residue 31–38 (GLSASGKS) participates in ATP binding. Ser-105 serves as the catalytic Phosphoserine intermediate.

This sequence belongs to the APS kinase family.

The enzyme catalyses adenosine 5'-phosphosulfate + ATP = 3'-phosphoadenylyl sulfate + ADP + H(+). It participates in sulfur metabolism; hydrogen sulfide biosynthesis; sulfite from sulfate: step 2/3. Functionally, catalyzes the synthesis of activated sulfate. This Saccharomyces bayanus (Yeast) protein is Adenylyl-sulfate kinase (MET14).